Consider the following 369-residue polypeptide: Leucine-specific-binding protein (369 aa).

An N-terminal signal peptide occupies residues 1 to 23; sequence MKRKAKTIIAGIVALAVSQGAMA. An intrachain disulfide couples Cys-76 to Cys-101.

The protein belongs to the leucine-binding protein family.

It localises to the periplasm. Functionally, this protein is a component of the leucine-specific transport system, which is one of the two periplasmic binding protein-dependent transport systems of the high-affinity transport of the branched-chain amino acids. The protein is Leucine-specific-binding protein (livK) of Salmonella typhi.